We begin with the raw amino-acid sequence, 503 residues long: Rhomboid-type serine protease 2 (503 aa).

A compositionally biased stretch (polar residues) spans 1–11 (MAAQSYYNGAY). A disordered region spans residues 1-66 (MAAQSYYNGA…SLRYSQQSIG (66 aa)). Residues 1-136 (MAAQSYYNGA…QKKKGFFQKK (136 aa)) are Cytoplasmic-facing. The chain crosses the membrane as a helical span at residues 137 to 157 (IAYVTYILTIAQIIVFIVELV). At 158 to 253 (KMGQLTGSPI…DKPAPDQWFR (96 aa)) the chain is on the extracellular side. A helical membrane pass occupies residues 254–274 (FIIPMFLHSGFVHIGFNLLVQ). The Cytoplasmic portion of the chain corresponds to 275-283 (MTMGADMER). The chain crosses the membrane as a helical span at residues 284-304 (MIGWWRYGLVYLSSGIWGFVL). The Extracellular portion of the chain corresponds to 305 to 316 (GGNYAGQGEASC). The helical transmembrane segment at 317 to 337 (GCSGALFGILALFVLDLLYGW) threads the bilayer. Ser-319 serves as the catalytic Nucleophile. The Cytoplasmic segment spans residues 338-342 (NDRQN). A helical transmembrane segment spans residues 343 to 363 (PWVELIIMVLGIAVSFVLGLL). Topologically, residues 364-365 (PG) are extracellular. A helical transmembrane segment spans residues 366-386 (LDNFSHLGGFTMGLALGLCVM). Residue His-371 is part of the active site. At 387-449 (RSPNALRERI…FAGRKPLWWA (63 aa)) the chain is on the cytoplasmic side. Residues 450–470 (WWLVRLGALVAVLIGFILLIV) traverse the membrane as a helical segment. At 471–503 (NFYKYPSSNCSWCYRFSCLPVNGWCDQGNLFSR) the chain is on the extracellular side.

This sequence belongs to the peptidase S54 family.

It localises to the membrane. The catalysed reaction is Cleaves type-1 transmembrane domains using a catalytic dyad composed of serine and histidine that are contributed by different transmembrane domains.. Functionally, probable rhomboid-type serine protease that catalyzes intramembrane proteolysis. In Emericella nidulans (strain FGSC A4 / ATCC 38163 / CBS 112.46 / NRRL 194 / M139) (Aspergillus nidulans), this protein is Rhomboid-type serine protease 2.